Consider the following 355-residue polypeptide: Peptide chain release factor 1 (355 aa).

The residue at position 233 (Q233) is an N5-methylglutamine. Residues 281-293 (RRNKEQERADSRR) show a composition bias toward basic and acidic residues. Residues 281–308 (RRNKEQERADSRRGQIGSGDRSERIRTY) form a disordered region.

It belongs to the prokaryotic/mitochondrial release factor family. In terms of processing, methylated by PrmC. Methylation increases the termination efficiency of RF1.

Its subcellular location is the cytoplasm. Its function is as follows. Peptide chain release factor 1 directs the termination of translation in response to the peptide chain termination codons UAG and UAA. The chain is Peptide chain release factor 1 from Rickettsia akari (strain Hartford).